The following is a 264-amino-acid chain: Diphthine synthase (264 aa).

Residues Leu-9, Asp-84, Val-87, 112–113 (SI), Leu-164, Ala-207, and His-232 contribute to the S-adenosyl-L-methionine site.

Belongs to the diphthine synthase family. In terms of assembly, homodimer.

The catalysed reaction is 2-[(3S)-amino-3-carboxypropyl]-L-histidyl-[translation elongation factor 2] + 3 S-adenosyl-L-methionine = diphthine-[translation elongation factor 2] + 3 S-adenosyl-L-homocysteine + 3 H(+). It participates in protein modification; peptidyl-diphthamide biosynthesis. Its function is as follows. S-adenosyl-L-methionine-dependent methyltransferase that catalyzes the trimethylation of the amino group of the modified target histidine residue in translation elongation factor 2 (EF-2), to form an intermediate called diphthine. The three successive methylation reactions represent the second step of diphthamide biosynthesis. This is Diphthine synthase from Methanothermobacter thermautotrophicus (strain ATCC 29096 / DSM 1053 / JCM 10044 / NBRC 100330 / Delta H) (Methanobacterium thermoautotrophicum).